The sequence spans 933 residues: Progesterone receptor (933 aa).

The interval 1-164 (MTELKAKGPR…PATQGVLSPL (164 aa)) is AF3; mediates transcriptional activation. Residues 1 to 256 (MTELKAKGPR…AAAGGGAAAV (256 aa)) form a disordered region. Positions 1 to 566 (MTELKAKGPR…YSFESLPQKI (566 aa)) are modulating, Pro-Rich. Phosphoserine is present on Ser-20. The LXXL motif 1 signature appears at 55 to 59 (LDGLL). Ser-81 bears the Phosphoserine mark. The LXXL motif 2 signature appears at 115-119 (LDTLL). Phosphoserine is present on residues Ser-130 and Ser-162. The mediates transcriptional transrepression stretch occupies residues 165-305 (MSRSGCKAGD…LATTMMDFIH (141 aa)). Residues 183–187 (KVLPR) carry the Nuclear localization signal motif. Phosphoserine is present on residues Ser-190 and Ser-213. A compositionally biased stretch (acidic residues) spans 220–231 (EVEEEDGSESEE). Low complexity predominate over residues 232–246 (SAGPLLKGKPRALGG). Ser-294 bears the Phosphoserine; by MAPK1 mark. Residues 335 to 356 (AXSAFAPPRSSPSASSTPVAVG) show a composition bias toward low complexity. The tract at residues 335 to 378 (AXSAFAPPRSSPSASSTPVAVGDFPDCAYPPDAEPKDDAYPLYS) is disordered. A Phosphoserine; by MAPK modification is found at Ser-345. Lys-388 participates in a covalent cross-link: Glycyl lysine isopeptide (Lys-Gly) (interchain with G-Cter in SUMO); alternate. Lys-388 participates in a covalent cross-link: Glycyl lysine isopeptide (Lys-Gly) (interchain with G-Cter in ubiquitin); alternate. The residue at position 400 (Ser-400) is a Phosphoserine; by CDK2. A disordered region spans residues 415–452 (PDFPLGPPPPLPPRAPPSRPGEAAVTAAPASASVSSAS). Residues 418–433 (PLGPPPPLPPRAPPSR) show a composition bias toward pro residues. Residues 434–452 (PGEAAVTAAPASASVSSAS) are compositionally biased toward low complexity. An AF1; mediates transcriptional activation region spans residues 456–546 (STLECILYKA…VYPPYLNYLR (91 aa)). A Glycyl lysine isopeptide (Lys-Gly) (interchain with G-Cter in SUMO) cross-link involves residue Lys-531. NR C4-type zinc fingers lie at residues 567 to 587 (CLIC…CGSC) and 603 to 627 (CAGR…LRKC). A DNA-binding region (nuclear receptor) is located at residues 567–639 (CLICGDEASG…AGMVLGGRKF (73 aa)). Ser-676 carries the post-translational modification Phosphoserine. The region spanning 679–913 (QDIQLIPPLI…EFPEMMSEVI (235 aa)) is the NR LBD domain. Residues 687–933 (LINLLMSIEP…MVKPLLFHKK (247 aa)) form an AF2; mediates transcriptional activation region. Position 766 (Arg-766) interacts with progesterone.

It belongs to the nuclear hormone receptor family. Interacts with SMARD1 and UNC45A. Interacts with CUEDC2; the interaction promotes ubiquitination, decreases sumoylation, and represses transcriptional activity. Interacts with PIAS3; the interaction promotes sumoylation of PR in a hormone-dependent manner, inhibits DNA-binding, and alters nuclear export. Interacts with SP1; the interaction requires ligand-induced phosphorylation on Ser-345 by ERK1/2-MAPK. Interacts with PRMT2. Interacts with NCOA2 and NCOA1. Interacts with KLF9. Interacts with GTF2B. In terms of processing, phosphorylated on multiple serine sites. Several of these sites are hormone-dependent. Phosphorylation on Ser-294 is highly hormone-dependent and modulates ubiquitination and sumoylation on Lys-388. Phosphorylation on Ser-102 and Ser-345 requires induction by hormone. Basal phosphorylation on Ser-81, Ser-162, Ser-190 and Ser-400 is increased in response to progesterone and can be phosphorylated in vitro by the CDK2-A1 complex. Increased levels of phosphorylation on Ser-400 also in the presence of EGF, heregulin, IGF, PMA and FBS. Phosphorylation at this site by CDK2 is ligand-independent, and increases nuclear translocation and transcriptional activity. Phosphorylation at Ser-162 and Ser-294, but not at Ser-190, is impaired during the G(2)/M phase of the cell cycle. Phosphorylation on Ser-345 by ERK1/2 MAPK is required for interaction with SP1. Sumoylation is hormone-dependent and represses transcriptional activity. Sumoylation on all three sites is enhanced by PIAS3. Desumoylated by SENP1. Sumoylation on Lys-388, the main site of sumoylation, is repressed by ubiquitination on the same site, and modulated by phosphorylation at Ser-294. Post-translationally, ubiquitination is hormone-dependent and represses sumoylation on the same site. Promoted by MAPK-mediated phosphorylation on Ser-294. Ubiquitinated by UBR5, leading to its degradation: UBR5 specifically recognizes and binds ligand-bound PGR when it is not associated with coactivators (NCOAs). In presence of NCOAs, the UBR5-degron is not accessible, preventing its ubiquitination and degradation. In terms of processing, palmitoylated by ZDHHC7 and ZDHHC21. Palmitoylation is required for plasma membrane targeting and for rapid intracellular signaling via ERK and AKT kinases and cAMP generation.

Its subcellular location is the nucleus. The protein localises to the cytoplasm. The steroid hormones and their receptors are involved in the regulation of eukaryotic gene expression and affect cellular proliferation and differentiation in target tissues. Transcriptional activator of several progesteron-dependent promoters in a variety of cell types. Involved in activation of SRC-dependent MAPK signaling on hormone stimulation. The protein is Progesterone receptor (PGR) of Pan troglodytes (Chimpanzee).